The following is a 466-amino-acid chain: MGKTLYEKVYEAHVAVAAEGETPILYIDRHLVHEVTSPQAFDGLREKGRQVRQVSKTFATMDHNVSTTTKDINASGEMARIQMETLIKNCQEFGVTLYDINHKYQGIVHVMGPELGITLPGMTIVCGDSHTATHGAFGSLAFGIGTSEVEHVLATQTLKQARAKTMKIEVQGKVADGITAKDIVLAIIGKTTAAGGTGYVVEFCGEAITDLSMEGRMTVCNMAIELGAKAGLIAPDKTTFDYIKGRKFAPTGADWDAAVEYWKTLKTDEDAKFDAVVTLNAADIKPQVTWGTNPGQVIAVDEPIPAPESFSDPVEKASAEKALAYMGLEAGKSLSEYKVDKVFVGSCTNSRIEDMRAAAVVAKGRKVASHVQALIVPGSEQVKAQAEAEGLDVIFKEAGFEWRLPGCSMCLAMNNDRLGPHERCASTSNRNFEGRQGRDGRTHLVSPAMAAAAAIAGHFVDIRDWK.

Positions 347, 407, and 410 each coordinate [4Fe-4S] cluster.

The protein belongs to the aconitase/IPM isomerase family. LeuC type 1 subfamily. As to quaternary structure, heterodimer of LeuC and LeuD. [4Fe-4S] cluster is required as a cofactor.

The catalysed reaction is (2R,3S)-3-isopropylmalate = (2S)-2-isopropylmalate. It functions in the pathway amino-acid biosynthesis; L-leucine biosynthesis; L-leucine from 3-methyl-2-oxobutanoate: step 2/4. Catalyzes the isomerization between 2-isopropylmalate and 3-isopropylmalate, via the formation of 2-isopropylmaleate. The sequence is that of 3-isopropylmalate dehydratase large subunit from Vibrio vulnificus (strain YJ016).